Consider the following 200-residue polypeptide: Transgelin (200 aa).

An N-acetylserine modification is found at Ser2. Phosphoserine is present on Ser11. The Calponin-homology (CH) domain maps to 26 to 136 (PEAIQNIKIW…QTLKSLSRYA (111 aa)). Residues 144-168 (FPVLGPQLSTKKPRPPVKSKPKHLQ) are disordered. Positions 151-164 (LSTKKPRPPVKSKP) are interaction with SH3 domain of ABP1. A compositionally biased stretch (basic residues) spans 154-165 (KKPRPPVKSKPK).

In terms of assembly, binds to actin. Interacts with ABP1.

Its subcellular location is the cytoplasm. It is found in the cytoskeleton. It localises to the actin patch. In terms of biological role, has actin-binding and actin-bundling activity. Stabilizes actin filaments against disassembly. This chain is Transgelin (SCP1), found in Saccharomyces cerevisiae (strain ATCC 204508 / S288c) (Baker's yeast).